Reading from the N-terminus, the 197-residue chain is MSELDSVAVLCGGRGRRMGSDKGLLLMDDRPFIEIITAKLLGHFSDVLVVLRDTDQAGTYRGILDDRVRILTDELPGAGPLGGIYTALGNISGDAALFLPCDAPLVTDEFLVNMKECFRRLGDSCDAIVPWGDDGPEPLHAVYSARVRGTVEALLSKNKRRVGTLIESINSCRIAAIRLDPTLQSFRNFNRPEDLRI.

Residues 10 to 12 (LCG), K22, D73, and D102 each bind GTP. A Mg(2+)-binding site is contributed by D102.

The protein belongs to the MobA family. Mg(2+) is required as a cofactor.

It is found in the cytoplasm. It catalyses the reaction Mo-molybdopterin + GTP + H(+) = Mo-molybdopterin guanine dinucleotide + diphosphate. Functionally, transfers a GMP moiety from GTP to Mo-molybdopterin (Mo-MPT) cofactor (Moco or molybdenum cofactor) to form Mo-molybdopterin guanine dinucleotide (Mo-MGD) cofactor. This is Probable molybdenum cofactor guanylyltransferase from Methanothermobacter thermautotrophicus (strain ATCC 29096 / DSM 1053 / JCM 10044 / NBRC 100330 / Delta H) (Methanobacterium thermoautotrophicum).